Reading from the N-terminus, the 237-residue chain is Uridylate kinase (237 aa).

Position 12–15 (Lys12–Gly15) interacts with ATP. An involved in allosteric activation by GTP region spans residues Gly20–Gly25. Position 54 (Gly54) interacts with UMP. Gly55 and Arg59 together coordinate ATP. Residues Asp72 and Thr133–Thr140 each bind UMP. Residues Tyr166 and Asp169 each contribute to the ATP site.

It belongs to the UMP kinase family. As to quaternary structure, homohexamer.

It localises to the cytoplasm. The enzyme catalyses UMP + ATP = UDP + ADP. It functions in the pathway pyrimidine metabolism; CTP biosynthesis via de novo pathway; UDP from UMP (UMPK route): step 1/1. With respect to regulation, allosterically activated by GTP. Inhibited by UTP. Catalyzes the reversible phosphorylation of UMP to UDP. The polypeptide is Uridylate kinase (Clostridium perfringens (strain SM101 / Type A)).